Consider the following 158-residue polypeptide: Transcription factor bHLH146 (158 aa).

A compositionally biased stretch (low complexity) spans 77 to 90; that stretch reads SSSSNPTTTTSSSS. The disordered stretch occupies residues 77 to 110; it reads SSSSNPTTTTSSSSDGIRILERPDKEGGNEEGGI. Residues 94–110 show a composition bias toward basic and acidic residues; the sequence is RILERPDKEGGNEEGGI. A bHLH; atypical domain is found at 94–143; sequence RILERPDKEGGNEEGGIEERLRELKKLLPGGEEMNVEEMLSEIGNYIKCL.

Belongs to the bHLH protein family.

Its subcellular location is the nucleus. The protein is Transcription factor bHLH146 (BHLH146) of Arabidopsis thaliana (Mouse-ear cress).